The following is a 461-amino-acid chain: Glyceraldehyde-3-phosphate dehydrogenase-like protein (461 aa).

Threonine 421 carries the phosphothreonine modification.

Belongs to the glyceraldehyde-3-phosphate dehydrogenase family.

This is Glyceraldehyde-3-phosphate dehydrogenase-like protein (gap2) from Pseudomonas aeruginosa (strain UCBPP-PA14).